Here is a 432-residue protein sequence, read N- to C-terminus: Probable pectate lyase 22 (432 aa).

An N-terminal signal peptide occupies residues 1-45 (MFRPNSLLIPSNLSTTKSQRNTMLNSSYLSFALIFFCCILFSALA). N-linked (GlcNAc...) asparagine glycosylation is present at Asn-65. Residues Asp-228, Asp-252, and Asp-256 each coordinate Ca(2+). Arg-308 is an active-site residue.

Belongs to the polysaccharide lyase 1 family. Ca(2+) serves as cofactor.

The enzyme catalyses Eliminative cleavage of (1-&gt;4)-alpha-D-galacturonan to give oligosaccharides with 4-deoxy-alpha-D-galact-4-enuronosyl groups at their non-reducing ends.. The protein operates within glycan metabolism; pectin degradation; 2-dehydro-3-deoxy-D-gluconate from pectin: step 2/5. This chain is Probable pectate lyase 22, found in Arabidopsis thaliana (Mouse-ear cress).